We begin with the raw amino-acid sequence, 485 residues long: Glutamyl-tRNA(Gln) amidotransferase subunit A (485 aa).

Catalysis depends on charge relay system residues Lys79 and Ser154. Residue Ser178 is the Acyl-ester intermediate of the active site.

This sequence belongs to the amidase family. GatA subfamily. Heterotrimer of A, B and C subunits.

The catalysed reaction is L-glutamyl-tRNA(Gln) + L-glutamine + ATP + H2O = L-glutaminyl-tRNA(Gln) + L-glutamate + ADP + phosphate + H(+). In terms of biological role, allows the formation of correctly charged Gln-tRNA(Gln) through the transamidation of misacylated Glu-tRNA(Gln) in organisms which lack glutaminyl-tRNA synthetase. The reaction takes place in the presence of glutamine and ATP through an activated gamma-phospho-Glu-tRNA(Gln). This chain is Glutamyl-tRNA(Gln) amidotransferase subunit A, found in Clostridium botulinum (strain Alaska E43 / Type E3).